The primary structure comprises 421 residues: Putative leucine-rich repeat protein R380 (421 aa).

LRR repeat units follow at residues Y48–P69, K70–P85, N89–K110, L111–P129, E130–P150, N151–I172, and E173–V191.

In Acanthamoeba polyphaga (Amoeba), this protein is Putative leucine-rich repeat protein R380.